The sequence spans 275 residues: Ribosomal RNA small subunit methyltransferase A (275 aa).

S-adenosyl-L-methionine-binding residues include asparagine 28, leucine 30, glycine 55, glutamate 77, aspartate 103, and asparagine 123.

The protein belongs to the class I-like SAM-binding methyltransferase superfamily. rRNA adenine N(6)-methyltransferase family. RsmA subfamily.

It localises to the cytoplasm. It carries out the reaction adenosine(1518)/adenosine(1519) in 16S rRNA + 4 S-adenosyl-L-methionine = N(6)-dimethyladenosine(1518)/N(6)-dimethyladenosine(1519) in 16S rRNA + 4 S-adenosyl-L-homocysteine + 4 H(+). In terms of biological role, specifically dimethylates two adjacent adenosines (A1518 and A1519) in the loop of a conserved hairpin near the 3'-end of 16S rRNA in the 30S particle. May play a critical role in biogenesis of 30S subunits. The sequence is that of Ribosomal RNA small subunit methyltransferase A from Rhizobium etli (strain ATCC 51251 / DSM 11541 / JCM 21823 / NBRC 15573 / CFN 42).